The sequence spans 384 residues: MAKHLFTSESVSEGHPDKIADQISDAVLDAILEQDPKARVACETYVKTGMVLVGGEITTSAWVDIEEITRNTVREIGYVHSDMGFDANSCAVLSAIGKQSPDINQGVDRADPLEQGAGDQGLMFGYATNETDVLMPAPITYAHRLVQRQAEVRKNGSLPWLRPDAKSQVTFQYDDGKIVGIDAVVLSTQHSEDIDQKSLQEAVMEEIIKPVLPTEWLNASTKFFINPTGRFVIGGPMGDCGLTGRKIIVDTYGGMARHGGGAFSGKDPSKVDRSAAYAARYVAKNIVAAGLADRCEIQVSYAIGVAEPTSIMVETFGTEKLPTEQLTLLVREFFDLRPYGLIQMLDLLHPIYKETAAYGHFGREHFPWEKTDKAAVLRDAAGLK.

Histidine 15 contacts ATP. Aspartate 17 serves as a coordination point for Mg(2+). Glutamate 43 lines the K(+) pocket. 2 residues coordinate L-methionine: glutamate 56 and glutamine 99. A flexible loop region spans residues glutamine 99 to arginine 109. ATP-binding positions include aspartate 164–lysine 166, arginine 230–phenylalanine 231, aspartate 239, arginine 245–lysine 246, alanine 262, and lysine 266. Aspartate 239 serves as a coordination point for L-methionine. Residue lysine 270 participates in L-methionine binding.

Belongs to the AdoMet synthase family. In terms of assembly, homotetramer; dimer of dimers. The cofactor is Mg(2+). It depends on K(+) as a cofactor.

It is found in the cytoplasm. The enzyme catalyses L-methionine + ATP + H2O = S-adenosyl-L-methionine + phosphate + diphosphate. The protein operates within amino-acid biosynthesis; S-adenosyl-L-methionine biosynthesis; S-adenosyl-L-methionine from L-methionine: step 1/1. Functionally, catalyzes the formation of S-adenosylmethionine (AdoMet) from methionine and ATP. The overall synthetic reaction is composed of two sequential steps, AdoMet formation and the subsequent tripolyphosphate hydrolysis which occurs prior to release of AdoMet from the enzyme. The sequence is that of S-adenosylmethionine synthase from Enterobacter sp. (strain 638).